The chain runs to 298 residues: Ribosomal RNA processing protein 36 homolog (298 aa).

The disordered stretch occupies residues 1 to 131; the sequence is MKPDIIKKRR…SDAPVEMTAM (131 aa). The span at 14-56 shows a compositional bias: acidic residues; that stretch reads SDDEDEYNEEDEMYEDDNNNYEEDEDDDDDDDEDDEDDDENEE. Polar residues-rich tracts occupy residues 61 to 70 and 83 to 92; these read QQLSNVSFSS and LNLNTITKNL. 2 coiled-coil regions span residues 88–112 and 196–228; these read ITKN…MNSK and RERD…KNKL. The segment covering 98 to 111 has biased composition (basic and acidic residues); that stretch reads FKKEEQQEKEEMNS. The disordered stretch occupies residues 279–298; the sequence is ISSKEKTFLPQRRSFDQDEN.

Belongs to the RRP36 family.

It is found in the nucleus. The protein resides in the nucleolus. In terms of biological role, involved in the early processing steps of the pre-rRNA in the maturation pathway leading to the 18S rRNA. This is Ribosomal RNA processing protein 36 homolog from Dictyostelium discoideum (Social amoeba).